Here is a 341-residue protein sequence, read N- to C-terminus: Methionine import ATP-binding protein MetN 2 (341 aa).

An ABC transporter domain is found at 2–241 (IELKEVVKEY…PQHAVTKRFV (240 aa)). An ATP-binding site is contributed by 38-45 (GFSGAGKS).

Belongs to the ABC transporter superfamily. Methionine importer (TC 3.A.1.24) family. As to quaternary structure, the complex is composed of two ATP-binding proteins (MetN), two transmembrane proteins (MetI) and a solute-binding protein (MetQ).

Its subcellular location is the cell membrane. The catalysed reaction is L-methionine(out) + ATP + H2O = L-methionine(in) + ADP + phosphate + H(+). The enzyme catalyses D-methionine(out) + ATP + H2O = D-methionine(in) + ADP + phosphate + H(+). Functionally, part of the ABC transporter complex MetNIQ involved in methionine import. Responsible for energy coupling to the transport system. This is Methionine import ATP-binding protein MetN 2 from Staphylococcus aureus (strain MRSA252).